The chain runs to 390 residues: Zinc finger protein 121 (390 aa).

A C2H2-type 1; degenerate zinc finger spans residues 88 to 110; that stretch reads FEYSDCEEAFVDQSHLQANRITH. The segment at 116–138 adopts a C2H2-type 2; degenerate zinc-finger fold; it reads YEQKQCGRAFTYSTSHAVSVKMH. 9 consecutive C2H2-type zinc fingers follow at residues 144-166, 172-194, 200-222, 228-250, 256-278, 284-306, 312-334, 340-362, and 368-390; these read YECK…MRTH, YECK…VRIH, YQCK…VRIH, YECN…FKTH, FECK…FRIH, YKCK…VKIH, YECK…IRTH, YICK…VRIH, and YICN…LKTH.

Belongs to the krueppel C2H2-type zinc-finger protein family.

It is found in the nucleus. May be involved in transcriptional regulation. The chain is Zinc finger protein 121 (ZNF121) from Homo sapiens (Human).